A 225-amino-acid polypeptide reads, in one-letter code: Uracil-DNA glycosylase (225 aa).

Asp-65 serves as the catalytic Proton acceptor.

This sequence belongs to the uracil-DNA glycosylase (UDG) superfamily. UNG family.

The protein resides in the cytoplasm. It carries out the reaction Hydrolyzes single-stranded DNA or mismatched double-stranded DNA and polynucleotides, releasing free uracil.. Its function is as follows. Excises uracil residues from the DNA which can arise as a result of misincorporation of dUMP residues by DNA polymerase or due to deamination of cytosine. This Bacillus anthracis (strain A0248) protein is Uracil-DNA glycosylase.